A 578-amino-acid polypeptide reads, in one-letter code: MNKSQEQVSFKDVCVDFTQEEWYLLDPAQKILYRDVILENYSNLVSVGYCITKPEVIFKIEQGEEPWILEKGFPSQDPERKWKVDDMLESSQENEDDHFWELLFHNNKTVSVENGDRGSKTFNLGTDPVSLRNYPYKICDSCEMSLKNISGLIISKKSCSRKKPDEFNVCEKLLLDIRHEKIPIGEKSYKYDQKRNAINYHQDLSQPSFGQSFEYSKNGQGFHDEAAFFTNKRSQIGETVCKYNECGRTFIESLKLNISQRPHLEMEPYGCSICGKSFCMNLRFGHQRALTKDNPYEYNEYGEIFCDNSAFIIHQGAYTRKILREYKVSDKTWEKSTVLKHQIVHMGGKSYDYNENGSNFSKKSHLTQLRRAHTGEKTFECGECGKTFWEKSNLTQHQRTHTGEKPYECTECGKAFCQKPHLTNHQRTHTGEKPYECKQCGKTFCVKSNLTEHQRTHTGEKPYECNACGKSFCHRSALTVHQRTHTGEKPFICNECGKSFCVKSNLIVHQRTHTGEKPYKCNECGKTFCEKSALTKHQRTHTGEKPYECNACGKTFSQRSVLTKHQRIHMRVKALSTS.

The KRAB domain occupies Val8 to Pro78. The C2H2-type 1; degenerate zinc-finger motif lies at Thr239 to His263. Lys340 participates in a covalent cross-link: Glycyl lysine isopeptide (Lys-Gly) (interchain with G-Cter in SUMO2). 7 C2H2-type zinc fingers span residues Phe379–His401, Tyr407–His429, Tyr435–His457, Tyr463–His485, Phe491–His513, Tyr519–Thr542, and Tyr547–His569.

Belongs to the krueppel C2H2-type zinc-finger protein family.

The protein resides in the nucleus. May be involved in transcriptional regulation. The protein is Zinc finger protein 248 (ZNF248) of Pongo abelii (Sumatran orangutan).